The following is a 149-amino-acid chain: MSEKQNEKVYDLSFFMPGQTIEAEEVEVPISKRFVDKEGNVVPFIFKAITTERIDELEKENTTYKNVKGRGRVKELDSQRFYARIAVETTVYPNFKAKELREAYKTEDPVEVAKRVLSVGGEYANWLNKAIEINGFDDDLEDLEEAAKN.

The protein to B.subtilis XkdN.

This is an uncharacterized protein from Bacillus subtilis (strain 168).